Reading from the N-terminus, the 202-residue chain is Superoxide dismutase [Mn] (202 aa).

His27, His82, Asp164, and His168 together coordinate Mn(2+).

This sequence belongs to the iron/manganese superoxide dismutase family. In terms of assembly, homodimer. The cofactor is Mn(2+).

The catalysed reaction is 2 superoxide + 2 H(+) = H2O2 + O2. Its function is as follows. Destroys superoxide anion radicals which are normally produced within the cells and which are toxic to biological systems. This Listeria innocua serovar 6a (strain ATCC BAA-680 / CLIP 11262) protein is Superoxide dismutase [Mn] (sodA).